The following is a 149-amino-acid chain: MALKDEFATRNFSIYGQWLGILSMILCFALGIANIFTFRPIIIVFSVITLCFSFVILFVEVPLLLRICPTSPTFDNLIRKISTNYTRAAAYGVMAVVVFLSCIDRTTSLLVPGIFLSFTGICYALAALKGQAFVGSKTLGGAGVAQMIV.

Asn11 carries an N-linked (GlcNAc...) asparagine glycan. 4 consecutive transmembrane segments (helical) span residues 18–38, 41–61, 84–103, and 108–128; these read WLGI…IFTF, IIIV…FVEV, NYTR…LSCI, and SLLV…LAAL.

It belongs to the TVP18 family.

Its subcellular location is the golgi apparatus membrane. Its function is as follows. Golgi membrane protein involved in vesicular trafficking. In Neurospora crassa (strain ATCC 24698 / 74-OR23-1A / CBS 708.71 / DSM 1257 / FGSC 987), this protein is Golgi apparatus membrane protein tvp-18 (tvp-18).